The following is a 353-amino-acid chain: O-antigen biosynthesis glycosyltransferase WclY (353 aa).

The chain crosses the membrane as a helical span at residues 116–136; the sequence is SLIGGLLWCSIWLFFDKLVIL. Positions 190 and 271 each coordinate UDP. Residues 263–271 carry the E(x7)E motif; the sequence is EGFGLTVLE.

Belongs to the glycosyltransferase group 1 family. Glycosyltransferase 4 subfamily.

Its subcellular location is the membrane. It functions in the pathway bacterial outer membrane biogenesis; LPS O-antigen biosynthesis. Its activity is regulated as follows. Activated by 5mM MnCl(2) and MgCl(2). No significant effect on activity by 5 mM ethylenediaminetetraacetic acid (EDTA), 0.125-0.5% Triton X-100 or dithiothreitol (DTT). Inhibited by 5 mM Zn-acetate. In terms of biological role, involved in the assembly of the O-repeating unit during O-antigen biosynthesis. Glucosyltransferase accountable for the alpha-D-Glc-1,4-beta-D-Gal linkage within the O-antigen. Transfers alpha-1,4-Glc to the Gal moiety of a specific Gal-beta1-3GalNAc-alpha-OPO3-PO3-phenoxyundecyl (Gal-beta1-3GalNAc-PP-PhU) synthetic natural acceptor substrate analog. Requires both Gal-beta1-3GalNAc-alpha and the diphosphate moiety in the acceptor. Not active with GalNAc-PP-PhU, GlcNAc-PP-PhU, Gal-beta1-3GalNAc-alpha-O-benzyl, D-Rha-alpha1-3GlcNAc-alpha-PP-PhU or D-Man-alpha1-3Man-alpha-5-benzamidopentyl (BAP), nor with glycopeptides TTTVTP (Gal-beta1-3GalNAc-alpha-)TPTG or TT (Gal-beta1-3GalNAc-alpha-)TVTPTPTG as acceptor substrates. Has a broad nucleotide sugar donor substrate specificity with ADP-Glc, TDP-Glc and UDP-Glc as superior donors. Gal, GlcNAc, and GalNAc residues are transferred from UDP-sugars, but with low activity. UDP-Xyl, UDP-GlcA, GDP-Fuc or GDP-K-Rha do not act as donors. This Escherichia coli protein is O-antigen biosynthesis glycosyltransferase WclY.